A 307-amino-acid polypeptide reads, in one-letter code: Leucine-rich repeat-containing protein 59 (307 aa).

Methionine 1 is modified (N-acetylmethionine). Threonine 2 is modified (N-acetylthreonine; in Leucine-rich repeat-containing protein 59, N-terminally processed). Residues 2–244 (TKTGSKGGNL…KPPPRKHNRS (243 aa)) lie on the Cytoplasmic side of the membrane. LRR repeat units lie at residues 10–31 (NLRD…NEVP), 40–62 (KATV…CGLT), 63–84 (HLVK…FGRL), 86–107 (NLQH…FAQL), and 109–128 (NLKW…AKVA). Phosphoserine occurs at positions 23 and 25. Lysine 73 is subject to N6-succinyllysine. Lysine 135 is modified (N6-acetyllysine). A coiled-coil region spans residues 148–216 (MKAVQADQER…KASKREQEKK (69 aa)). Residues 150–242 (AVQADQERER…PRKPPPRKHN (93 aa)) form a disordered region. The span at 154 to 221 (DQERERQRRL…EQEKKPKKET (68 aa)) shows a compositional bias: basic and acidic residues. The segment covering 229–242 (SGSRPRKPPPRKHN) has biased composition (basic residues). A helical transmembrane segment spans residues 245–265 (WAVLKGLLLLLLLCVAGGLVV). Residues 266 to 307 (CRVTGLQQQPLCTSVNAIYDNAVQGLRHHEILQWVLQTDSQQ) are Lumenal-facing.

Can form homodimers. Interacts with SGO1. Interacts with FGF1.

It localises to the microsome membrane. It is found in the endoplasmic reticulum membrane. Its subcellular location is the nucleus envelope. Its function is as follows. Required for nuclear import of FGF1, but not that of FGF2. Might regulate nuclear import of exogenous FGF1 by facilitating interaction with the nuclear import machinery and by transporting cytosolic FGF1 to, and possibly through, the nuclear pores. The protein is Leucine-rich repeat-containing protein 59 (Lrrc59) of Rattus norvegicus (Rat).